The following is a 373-amino-acid chain: 3 beta-hydroxysteroid dehydrogenase/Delta 5--&gt;4-isomerase type 6 (373 aa).

Y155 (proton acceptor) is an active-site residue. K159 is an NAD(+) binding site. Residues 288-308 traverse the membrane as a helical segment; sequence VPLLYWLAFMLETVSFLLSPI.

The protein belongs to the 3-beta-HSD family. Expressed in skin and testis.

The protein localises to the endoplasmic reticulum membrane. The protein resides in the mitochondrion membrane. It carries out the reaction a 3beta-hydroxy-Delta(5)-steroid + NAD(+) = a 3-oxo-Delta(5)-steroid + NADH + H(+). The enzyme catalyses a 3-oxo-Delta(5)-steroid = a 3-oxo-Delta(4)-steroid. It functions in the pathway lipid metabolism; steroid biosynthesis. 3-beta-HSD is a bifunctional enzyme, that catalyzes the oxidative conversion of Delta(5)-ene-3-beta-hydroxy steroid, and the oxidative conversion of ketosteroids. The 3-beta-HSD enzymatic system plays a crucial role in the biosynthesis of all classes of hormonal steroids. May be involved in local production of progesterone. In Mus musculus (Mouse), this protein is 3 beta-hydroxysteroid dehydrogenase/Delta 5--&gt;4-isomerase type 6 (Hsd3b6).